The chain runs to 58 residues: MLGWTLTFLVIALVAGVLGFTGIAGAAAGIAKIIFFVFVVLLLISLVSRALSGKPPRP.

A run of 2 helical transmembrane segments spans residues 6 to 26 (LTFL…IAGA) and 27 to 47 (AAGI…ISLV).

It belongs to the UPF0391 family.

Its subcellular location is the cell membrane. The protein is UPF0391 membrane protein Sden_3712 of Shewanella denitrificans (strain OS217 / ATCC BAA-1090 / DSM 15013).